A 170-amino-acid polypeptide reads, in one-letter code: Photosystem I assembly protein Ycf3 (170 aa).

3 TPR repeats span residues 35-68 (AFTYYRDGMLAQSEGNYAEALQNYYEATRLEIDP), 72-105 (SYILYNIGLIHTSNGEHTKALEYYFRALERNPFL), and 120-153 (GEQAILQGDSEIAEAWFDQAAEYWKQAIALTPGN).

This sequence belongs to the Ycf3 family.

It is found in the plastid. It localises to the chloroplast thylakoid membrane. In terms of biological role, essential for the assembly of the photosystem I (PSI) complex. May act as a chaperone-like factor to guide the assembly of the PSI subunits. This chain is Photosystem I assembly protein Ycf3, found in Oryza nivara (Indian wild rice).